We begin with the raw amino-acid sequence, 436 residues long: UDP-N-acetylmuramate--L-alanine ligase (436 aa).

108–114 (GAHGKTS) contributes to the ATP binding site.

Belongs to the MurCDEF family.

It is found in the cytoplasm. The enzyme catalyses UDP-N-acetyl-alpha-D-muramate + L-alanine + ATP = UDP-N-acetyl-alpha-D-muramoyl-L-alanine + ADP + phosphate + H(+). It functions in the pathway cell wall biogenesis; peptidoglycan biosynthesis. Cell wall formation. The polypeptide is UDP-N-acetylmuramate--L-alanine ligase (Bacillus cereus (strain ZK / E33L)).